Reading from the N-terminus, the 390-residue chain is Putative glutamate--cysteine ligase 2 (390 aa).

This sequence belongs to the glutamate--cysteine ligase type 2 family. YbdK subfamily.

The enzyme catalyses L-cysteine + L-glutamate + ATP = gamma-L-glutamyl-L-cysteine + ADP + phosphate + H(+). ATP-dependent carboxylate-amine ligase which exhibits weak glutamate--cysteine ligase activity. The polypeptide is Putative glutamate--cysteine ligase 2 (Chloroflexus aggregans (strain MD-66 / DSM 9485)).